A 297-amino-acid chain; its full sequence is Small ribosomal subunit biogenesis GTPase RsgA (297 aa).

One can recognise a CP-type G domain in the interval 65–223; the sequence is INEIGRPAVA…IADTPGFSAI (159 aa). Residues 114–117 and 166–174 each bind GTP; these read SKSD and GQSGAGKST. Residues C247, C252, H254, and C260 each coordinate Zn(2+).

It belongs to the TRAFAC class YlqF/YawG GTPase family. RsgA subfamily. Monomer. Associates with 30S ribosomal subunit, binds 16S rRNA. Zn(2+) serves as cofactor.

Its subcellular location is the cytoplasm. Its function is as follows. One of several proteins that assist in the late maturation steps of the functional core of the 30S ribosomal subunit. Helps release RbfA from mature subunits. May play a role in the assembly of ribosomal proteins into the subunit. Circularly permuted GTPase that catalyzes slow GTP hydrolysis, GTPase activity is stimulated by the 30S ribosomal subunit. This is Small ribosomal subunit biogenesis GTPase RsgA from Lactobacillus johnsonii (strain CNCM I-12250 / La1 / NCC 533).